A 456-amino-acid chain; its full sequence is Probable transcription factor At3g04930 (456 aa).

Residues 1 to 71 form a disordered region; that stretch reads MTSDHRDALF…LNSPSTSSLP (71 aa). Composition is skewed to acidic residues over residues 15–38 and 50–62; these read ESPDPDEGGVADGGESDTDEDLRD and AEAEDDDPEEEDL. S16 carries the post-translational modification Phosphoserine.

This sequence belongs to the GeBP family.

The protein is Probable transcription factor At3g04930 of Arabidopsis thaliana (Mouse-ear cress).